A 470-amino-acid polypeptide reads, in one-letter code: Peripherin (470 aa).

The head stretch occupies residues 1–99 (MSHHPSGLRA…FLATRSNEKQ (99 aa)). Y17 carries the 3'-nitrotyrosine modification. A phosphoserine mark is found at S28, S50, and S59. In terms of domain architecture, IF rod spans 97–407 (EKQELQELND…KLLEGEESRI (311 aa)). A coil 1A region spans residues 100 to 132 (ELQELNDRFANFIEKVRFLEQQNAALRGELSQA). The linker 1 stretch occupies residues 133 to 143 (RGQEPARADQL). Residues 144 to 239 (CQQELRELRR…KLHEEELRDL (96 aa)) form a coil 1B region. Residues 240-262 (QVSVESQQVQQVEVEATVKPELT) form a linker 2 region. The tract at residues 263–405 (AALRDIRAQY…YRKLLEGEES (143 aa)) is coil 2. Y379 is subject to 3'-nitrotyrosine. Positions 406–470 (RISVPVHSFA…ELDKSSAHSY (65 aa)) are tail. Positions 447 to 470 (NGEVVTESQKEQRSELDKSSAHSY) are disordered. The segment covering 454–470 (SQKEQRSELDKSSAHSY) has biased composition (basic and acidic residues). Phosphotyrosine is present on Y470.

It belongs to the intermediate filament family. In terms of assembly, forms homodimers (in vitro). Homopolymerizes into a filamentous network (in vitro). Forms heterodimers with NEFL, NEFM or NEFH (in vitro). Interacts with DST (via C-terminus). Interacts with RAB7A; the interaction is direct. Interacts with PRKCE (via phorbol-ester/DAG-type 2 domain). Post-translationally, phosphorylated; phosphorylation increases after nerve injury in regenerating neurons. As to expression, expressed in the neurons of the outer hair cells in the organ of Corti and to a lesser extent in type I spiral ganglion cells.

The protein localises to the cytoplasm. It localises to the cytoskeleton. The protein resides in the cell projection. It is found in the axon. Its subcellular location is the perikaryon. Functionally, class-III neuronal intermediate filament protein. May form an independent structural network without the involvement of other neurofilaments or may cooperate with the neuronal intermediate filament proteins NEFL, NEFH, NEFM and INA to form a filamentous network. Assembly of the neuronal intermediate filaments may be regulated by RAB7A. Plays a role in the development of unmyelinated sensory neurons. May be involved in axon elongation and axon regeneration after injury. Inhibits neurite extension in type II spiral ganglion neurons in the cochlea. The protein is Peripherin (PRPH) of Homo sapiens (Human).